We begin with the raw amino-acid sequence, 570 residues long: Urease subunit alpha (570 aa).

The 440-residue stretch at 131-570 (GGMDSHIHFI…LPMAQRYFLF (440 aa)) folds into the Urease domain. His-136, His-138, and Lys-219 together coordinate Ni(2+). Lys-219 bears the N6-carboxylysine mark. His-221 is a substrate binding site. The Ni(2+) site is built by His-248 and His-274. Residue His-322 is the Proton donor of the active site. Asp-362 is a Ni(2+) binding site.

This sequence belongs to the metallo-dependent hydrolases superfamily. Urease alpha subunit family. Heterotrimer of UreA (gamma), UreB (beta) and UreC (alpha) subunits. Three heterotrimers associate to form the active enzyme. It depends on Ni cation as a cofactor. Carboxylation allows a single lysine to coordinate two nickel ions.

Its subcellular location is the cytoplasm. The enzyme catalyses urea + 2 H2O + H(+) = hydrogencarbonate + 2 NH4(+). Its pathway is nitrogen metabolism; urea degradation; CO(2) and NH(3) from urea (urease route): step 1/1. This is Urease subunit alpha from Sinorhizobium medicae (strain WSM419) (Ensifer medicae).